The chain runs to 293 residues: Histamine N-methyltransferase B (293 aa).

Residue glutamate 28 coordinates substrate. Residues glycine 60, glutamate 89, glutamine 94, serine 120, and isoleucine 142 each coordinate S-adenosyl-L-methionine. Residue asparagine 283 coordinates substrate.

This sequence belongs to the class I-like SAM-binding methyltransferase superfamily. HNMT family. In terms of assembly, monomer.

It localises to the cytoplasm. It catalyses the reaction histamine + S-adenosyl-L-methionine = N(tau)-methylhistamine + S-adenosyl-L-homocysteine + H(+). In terms of biological role, inactivates histamine by N-methylation. Plays an important role in degrading histamine and in regulating the airway response to histamine. This chain is Histamine N-methyltransferase B (hnmt-b), found in Xenopus laevis (African clawed frog).